A 124-amino-acid polypeptide reads, in one-letter code: uncharacterized protein (124 aa).

The interval 1-65 (MAENSRYVRL…RPASSSNPDY (65 aa)) is disordered. The span at 37–47 (LNSNDAESQQV) shows a compositional bias: polar residues.

This is an uncharacterized protein from Microplitis demolitor (Parasitoid wasp).